We begin with the raw amino-acid sequence, 337 residues long: ATP-dependent 6-phosphofructokinase (337 aa).

ATP is bound at residue Gly-11. Residue Arg-21 to Arg-25 participates in ADP binding. ATP is bound by residues Arg-72–Tyr-73 and Gly-102–Ser-105. Asp-103 lines the Mg(2+) pocket. Substrate is bound at residue Thr-125–Asp-127. Asp-127 functions as the Proton acceptor in the catalytic mechanism. Residue Arg-154 coordinates ADP. Substrate contacts are provided by residues Arg-162 and Met-169 to Arg-171. ADP contacts are provided by residues Gly-185–Asp-187 and Lys-214–His-216. Substrate-binding positions include Glu-223, Arg-245, and His-251 to Arg-254.

Belongs to the phosphofructokinase type A (PFKA) family. ATP-dependent PFK group I subfamily. Prokaryotic clade 'B1' sub-subfamily. As to quaternary structure, homotetramer. Mg(2+) is required as a cofactor.

The protein localises to the cytoplasm. The enzyme catalyses beta-D-fructose 6-phosphate + ATP = beta-D-fructose 1,6-bisphosphate + ADP + H(+). It functions in the pathway carbohydrate degradation; glycolysis; D-glyceraldehyde 3-phosphate and glycerone phosphate from D-glucose: step 3/4. Allosterically activated by ADP and other diphosphonucleosides, and allosterically inhibited by phosphoenolpyruvate. Its function is as follows. Catalyzes the phosphorylation of D-fructose 6-phosphate to fructose 1,6-bisphosphate by ATP, the first committing step of glycolysis. The chain is ATP-dependent 6-phosphofructokinase from Streptococcus uberis (strain ATCC BAA-854 / 0140J).